A 447-amino-acid polypeptide reads, in one-letter code: N-succinylarginine dihydrolase (447 aa).

Substrate contacts are provided by residues 19 to 28 (AGLSFGNEAS), Asn110, and 137 to 138 (HR). Residue Glu174 is part of the active site. Arg212 lines the substrate pocket. The active site involves His248. Residues Asp250 and Asn359 each contribute to the substrate site. Cys365 (nucleophile) is an active-site residue.

The protein belongs to the succinylarginine dihydrolase family. Homodimer.

The enzyme catalyses N(2)-succinyl-L-arginine + 2 H2O + 2 H(+) = N(2)-succinyl-L-ornithine + 2 NH4(+) + CO2. The protein operates within amino-acid degradation; L-arginine degradation via AST pathway; L-glutamate and succinate from L-arginine: step 2/5. In terms of biological role, catalyzes the hydrolysis of N(2)-succinylarginine into N(2)-succinylornithine, ammonia and CO(2). This chain is N-succinylarginine dihydrolase, found in Salmonella dublin (strain CT_02021853).